Reading from the N-terminus, the 242-residue chain is Serine hydrolase cnsH (242 aa).

Active-site charge relay system residues include Ser56, Asp138, and His216.

The protein belongs to the AB hydrolase 3 family.

Its pathway is alkaloid biosynthesis. Its function is as follows. Serine hydrolase; part of the gene cluster that mediates the biosynthesis of communesins, a prominent class of indole alkaloids with great potential as pharmaceuticals. Communesins are biosynthesized by the coupling of tryptamine and aurantioclavine, two building blocks derived from L-tryptophan. The L-tryptophan decarboxylase cnsB converts L-tryptophan to tryptamine, whereas the tryptophan dimethylallyltransferase cnsF converts L-tryptophan to 4-dimethylallyl tryptophan which is further transformed to aurantioclavine by the aurantioclavine synthase cnsA, probably aided by the catalase cnsD. The cytochrome P450 monooxygenase cnsC catalyzes the heterodimeric coupling between the two different indole moieties, tryptamine and aurantioclavine, to construct vicinal quaternary stereocenters and yield the heptacyclic communesin scaffold. The O-methyltransferase cnsE then methylates the communesin scaffold to produce communesin K, the simplest characterized communesin that contains the heptacyclic core. The dioxygenase cnsJ converts communesin K into communesin I. Acylation to introduce the hexadienyl group at position N16 of communesin I by the acyltransferase cnsK leads to the production of communesin B. The hexadienyl group is produced by the highly reducing polyketide synthase cnsI, before being hydrolytically removed from cnsI by the serine hydrolase cnsH, converted into hexadienyl-CoA by the CoA ligase cnsG, and then transferred to communesin I by cnsK. Surprisingly, cnsK may also be a promiscuous acyltransferase that can tolerate a range of acyl groups, including acetyl-, propionyl-, and butyryl-CoA, which lead to communesins A, G and H respectively. The roles of the alpha-ketoglutarate-dependent dioxygenases cnsM and cnsP have still to be determined. The polypeptide is Serine hydrolase cnsH (Penicillium expansum (Blue mold rot fungus)).